A 185-amino-acid chain; its full sequence is Large ribosomal subunit protein uL16m (185 aa).

It belongs to the universal ribosomal protein uL16 family.

Its subcellular location is the mitochondrion. The sequence is that of Large ribosomal subunit protein uL16m (RPL16) from Zea mays (Maize).